The chain runs to 278 residues: Elongation factor Ts (278 aa).

The interval 80–83 (TDFV) is involved in Mg(2+) ion dislocation from EF-Tu.

This sequence belongs to the EF-Ts family.

Its subcellular location is the cytoplasm. In terms of biological role, associates with the EF-Tu.GDP complex and induces the exchange of GDP to GTP. It remains bound to the aminoacyl-tRNA.EF-Tu.GTP complex up to the GTP hydrolysis stage on the ribosome. This is Elongation factor Ts from Pseudarthrobacter chlorophenolicus (strain ATCC 700700 / DSM 12829 / CIP 107037 / JCM 12360 / KCTC 9906 / NCIMB 13794 / A6) (Arthrobacter chlorophenolicus).